Reading from the N-terminus, the 362-residue chain is Phosphoserine aminotransferase (362 aa).

L-glutamate is bound by residues Ser-9 and Arg-42. Residues 76 to 77 (GR), Trp-102, Thr-153, Asp-174, and Gln-197 each bind pyridoxal 5'-phosphate. N6-(pyridoxal phosphate)lysine is present on Lys-198. 239–240 (NT) is a pyridoxal 5'-phosphate binding site.

This sequence belongs to the class-V pyridoxal-phosphate-dependent aminotransferase family. SerC subfamily. As to quaternary structure, homodimer. Requires pyridoxal 5'-phosphate as cofactor.

The protein localises to the cytoplasm. The enzyme catalyses O-phospho-L-serine + 2-oxoglutarate = 3-phosphooxypyruvate + L-glutamate. The catalysed reaction is 4-(phosphooxy)-L-threonine + 2-oxoglutarate = (R)-3-hydroxy-2-oxo-4-phosphooxybutanoate + L-glutamate. It functions in the pathway amino-acid biosynthesis; L-serine biosynthesis; L-serine from 3-phospho-D-glycerate: step 2/3. It participates in cofactor biosynthesis; pyridoxine 5'-phosphate biosynthesis; pyridoxine 5'-phosphate from D-erythrose 4-phosphate: step 3/5. Functionally, catalyzes the reversible conversion of 3-phosphohydroxypyruvate to phosphoserine and of 3-hydroxy-2-oxo-4-phosphonooxybutanoate to phosphohydroxythreonine. The sequence is that of Phosphoserine aminotransferase from Escherichia coli O127:H6 (strain E2348/69 / EPEC).